A 284-amino-acid polypeptide reads, in one-letter code: 2-dehydro-3-deoxyphosphooctonate aldolase (284 aa).

It belongs to the KdsA family.

It localises to the cytoplasm. The catalysed reaction is D-arabinose 5-phosphate + phosphoenolpyruvate + H2O = 3-deoxy-alpha-D-manno-2-octulosonate-8-phosphate + phosphate. Its pathway is carbohydrate biosynthesis; 3-deoxy-D-manno-octulosonate biosynthesis; 3-deoxy-D-manno-octulosonate from D-ribulose 5-phosphate: step 2/3. The protein operates within bacterial outer membrane biogenesis; lipopolysaccharide biosynthesis. This chain is 2-dehydro-3-deoxyphosphooctonate aldolase, found in Vibrio atlanticus (strain LGP32) (Vibrio splendidus (strain Mel32)).